The following is a 139-amino-acid chain: Acyl carrier protein 4, chloroplastic (139 aa).

Residues 1–55 (MASAAAGASICIKSASCSPLAPGRISSLRSVSLPVSRKSFPSLRSSKGSFARVSC) constitute a chloroplast transit peptide. The region spanning 59-134 (PETVAKVCRI…DAADLIEKLM (76 aa)) is the Carrier domain. Serine 94 is modified (O-(pantetheine 4'-phosphoryl)serine).

Belongs to the acyl carrier protein (ACP) family. 4'-phosphopantetheine is transferred from CoA to a specific serine of apo-ACP by acpS. This modification is essential for activity because fatty acids are bound in thioester linkage to the sulfhydryl of the prosthetic group.

Its subcellular location is the plastid. It localises to the chloroplast. It functions in the pathway lipid metabolism; fatty acid biosynthesis. In terms of biological role, carrier of the growing fatty acid chain in fatty acid biosynthesis. The protein is Acyl carrier protein 4, chloroplastic (ACL1) of Cuphea lanceolata (Cigar flower).